The following is a 92-amino-acid chain: Pyrimidine/purine nucleoside phosphorylase (92 aa).

It belongs to the nucleoside phosphorylase PpnP family.

The catalysed reaction is a purine D-ribonucleoside + phosphate = a purine nucleobase + alpha-D-ribose 1-phosphate. The enzyme catalyses adenosine + phosphate = alpha-D-ribose 1-phosphate + adenine. It catalyses the reaction cytidine + phosphate = cytosine + alpha-D-ribose 1-phosphate. It carries out the reaction guanosine + phosphate = alpha-D-ribose 1-phosphate + guanine. The catalysed reaction is inosine + phosphate = alpha-D-ribose 1-phosphate + hypoxanthine. The enzyme catalyses thymidine + phosphate = 2-deoxy-alpha-D-ribose 1-phosphate + thymine. It catalyses the reaction uridine + phosphate = alpha-D-ribose 1-phosphate + uracil. It carries out the reaction xanthosine + phosphate = alpha-D-ribose 1-phosphate + xanthine. Its function is as follows. Catalyzes the phosphorolysis of diverse nucleosides, yielding D-ribose 1-phosphate and the respective free bases. Can use uridine, adenosine, guanosine, cytidine, thymidine, inosine and xanthosine as substrates. Also catalyzes the reverse reactions. This Rhodopirellula baltica (strain DSM 10527 / NCIMB 13988 / SH1) protein is Pyrimidine/purine nucleoside phosphorylase.